The following is a 280-amino-acid chain: Dehydrogenase/reductase SDR family member 2, mitochondrial (280 aa).

The N-terminal 23 residues, 1–23 (MLSAVARGYQGWFHPCARLSVRM), are a transit peptide targeting the mitochondrion. Residues S46 and I48 each contribute to the NAD(+) site. Position 96 is an N6-acetyllysine; alternate (K96). K96 carries the N6-succinyllysine; alternate modification. S172 serves as a coordination point for substrate. NAD(+) contacts are provided by Y185 and K189. The active-site Proton acceptor is Y185. The residue at position 219 (K219) is an N6-acetyllysine; alternate. K219 carries the post-translational modification N6-succinyllysine; alternate. T220 lines the NAD(+) pocket. S223 carries the phosphoserine modification. K237 is subject to N6-succinyllysine.

The protein belongs to the short-chain dehydrogenases/reductases (SDR) family. Directly interacts with MDM2; this interaction occurs in the nucleus and does not target DHRS2 to degradation. In terms of tissue distribution, widely expressed, with highest levels in liver and kidney, followed by heart, spleen, skeletal muscle and placenta. In hemopoietic cells, expressed in dendritic cells, but not in monocytes, macrophages, granulocytes, nor in B and T lymphocytes.

It localises to the mitochondrion matrix. Its subcellular location is the nucleus. Functionally, NADPH-dependent oxidoreductase which catalyzes the reduction of dicarbonyl compounds. Displays reductase activity in vitro with 3,4-hexanedione, 2,3-heptanedione and 1-phenyl-1,2-propanedione as substrates. May function as a dicarbonyl reductase in the enzymatic inactivation of reactive carbonyls involved in covalent modification of cellular components. Also displays a minor hydroxysteroid dehydrogenase activity toward bile acids such as ursodeoxycholic acid (UDCA) and isoursodeoxycholic acid (isoUDCA), which makes it unlikely to control hormone levels. Doesn't show any activity in vitro with retinoids and sugars as substrates. Attenuates MDM2-mediated p53/TP53 degradation, leading to p53/TP53 stabilization and increased transcription activity, resulting in the accumulation of MDM2 and CDKN1A/p21. Reduces proliferation, migration and invasion of cancer cells and well as the production of ROS in cancer. In Homo sapiens (Human), this protein is Dehydrogenase/reductase SDR family member 2, mitochondrial.